A 1132-amino-acid chain; its full sequence is MGKGSSKGHTPREAKDNLKSTQLLSVIDAISEGPIEGPVDGLKSVLLNSTPVLDTEGNTNISGVTVVFRAGEQEQTPPEGFESSGSETVLGTEVKYDTPITRTITSANIDRLRFTFGVQALVETTSKGDRNPSEVRLLVQIQRNGGWVTEKDITIKGKTTSQYLASVVMGNLPPRPFNIRMRRMTPDSTTDQLQNKTLWSSYTEIIDVKQCYPNTALVGVQVDSEQFGSQQVSRNYHLRGRILQVPSNYNPQTRQYSGIWDGTFKPAYSNNMAWCLWDMLTHPRYGMGKRLGAADVDKWALYVIGQYCDQSVPDGFGGTEPRITCNAYLTTQRKAWDVLSDFCSAMRCMPVWNGQTLTFVQDRPSDKTWTYNRSNVVMPDDGAPFRYSFSALKDRHNAVEVNWIDPNNGWETATELVEDTQAIARYGRNVTKMDAFGCTSRGQAHRAGLWLIKTELLETQTVDFSVGAEGLRHVPGDVIEICDDDYAGISTGGRVLAVNSQTRTLTLDREITLPSSGTALISLVDGSGNPVSVEVQSVTDGVKVKVSRVPDGVAEYSVWELKLPTLRQRLFRCVSIRENDDGTYAITAVQHVPEKEAIVDNGAHFDGEQSGTVNGVTPPAVQHLTAEVTADSGEYQVLARWDTPKVVKGVSFLLRLTVTADDGSERLVSTARTTETTYRFTQLALGNYRLTVRAVNAWGQQGDPASVSFRIAAPAAPSRIELTPGYFQITATPHLAVYDPTVQFEFWFSEKQIADIRQVETSTRYLGTALYWIAASINIKPGHDYYFYIRSVNTVGKSAFVEAVGRASDDAEGYLDFFKGKITESHLGKELLEKVELTEDNASRLEEFSKEWKDASDKWNAMWAVKIEQTKDGKHYVAGIGLSMEDTEEGKLSQFLVAANRIAFIDPANGNETPMFVAQGNQIFMNDVFLKRLTAPTITSGGNPPAFSLTPDGKLTAKNADISGSVNANSGTLSNVTIAENCTINGTLRAEKIVGDIVKAASAAFPRQRESSVDWPSGTRTVTVTDDHPFDRQIVVLPLTFRGSKRTVSGRTTYSMCYLKVLMNGAVIYDGAANEAVQVFSRIVDMPAGRGNVILTFTLTSTRHSADIPPYTFASDVQVMVIKKQALGISVV.

2 consecutive Fibronectin type-III domains span residues 618–711 (PPAV…SFRI) and 712–807 (AAPA…VGRA). The tract at residues 883 to 1132 (SMEDTEEGKL…KKQALGISVV (250 aa)) is interaction with host LamB.

It belongs to the Caudoviricetes tip attachment protein J family. As to quaternary structure, interacts with host LamB.

It is found in the virion. Its subcellular location is the host cytoplasm. Attaches the virion to the host receptor LamB, inducing viral DNA ejection. During tail assembly, initiates distal tail tip assembly by interacting with gpI, gpL and gpK. During virus entry to host cell, binds strongly to host LamB in an irreversible attachment. The binding induces structural changes in the tail leading to viral DNA injection through LamB trimeric pore. The protein is Tip attachment protein J (J) of Escherichia coli (Bacteriophage lambda).